Consider the following 398-residue polypeptide: tRNA(Ile)-lysidine synthase (398 aa).

25–30 lines the ATP pocket; it reads SGGVDS.

It belongs to the tRNA(Ile)-lysidine synthase family.

It localises to the cytoplasm. The catalysed reaction is cytidine(34) in tRNA(Ile2) + L-lysine + ATP = lysidine(34) in tRNA(Ile2) + AMP + diphosphate + H(+). Ligates lysine onto the cytidine present at position 34 of the AUA codon-specific tRNA(Ile) that contains the anticodon CAU, in an ATP-dependent manner. Cytidine is converted to lysidine, thus changing the amino acid specificity of the tRNA from methionine to isoleucine. The polypeptide is tRNA(Ile)-lysidine synthase (Francisella tularensis subsp. tularensis (strain SCHU S4 / Schu 4)).